A 114-amino-acid chain; its full sequence is Nucleoid-associated protein PCC7424_2224 (114 aa).

Belongs to the YbaB/EbfC family. Homodimer.

It is found in the cytoplasm. The protein localises to the nucleoid. In terms of biological role, binds to DNA and alters its conformation. May be involved in regulation of gene expression, nucleoid organization and DNA protection. This chain is Nucleoid-associated protein PCC7424_2224, found in Gloeothece citriformis (strain PCC 7424) (Cyanothece sp. (strain PCC 7424)).